A 232-amino-acid polypeptide reads, in one-letter code: GDT1-like protein 5 (232 aa).

6 consecutive transmembrane segments (helical) span residues 13 to 33 (LAMT…AILA), 40 to 60 (LVLA…VSLG), 72 to 92 (THHV…WEGF), 135 to 155 (PFVL…TFFG), 175 to 195 (FGVV…AVMG), and 207 to 227 (MVGL…YLSG).

Belongs to the GDT1 family.

Its subcellular location is the membrane. This is GDT1-like protein 5 from Oryza sativa subsp. japonica (Rice).